Reading from the N-terminus, the 337-residue chain is MRVLGIETSCDETGIAIYDDQQGLLANQLYSQVKLHADYGGVVPELASRDHVRKTVPLIQAALKEAGLTAKDIDAVAYTAGPGLVGALLVGATVGRSLAFAWNVPAIPVHHMEGHLLAPMLEDNPPAFPFVALLVSGGHTQLISVTGIGQYELLGESIDDAAGEAFDKTAKLLGLDYPGGPMLSKMAAQGTEGRFVFPRPMTDRPGLDFSFSGLKTFAANTIRNNGDDEQTRADIARAFEDAVVDTLMIKCRRALEQTGFKRLVMAGGVSANRTLRAKLAEMMQKRGGEVFYARPEFCTDNGAMIAYAGMVRLQTGAKAELGVTVRPRWPLAELPAA.

The Fe cation site is built by His111 and His115. Residues 134 to 138, Asp167, Gly180, and Asn272 contribute to the substrate site; that span reads LVSGG. Asp300 is a binding site for Fe cation.

It belongs to the KAE1 / TsaD family. Fe(2+) is required as a cofactor.

The protein resides in the cytoplasm. It carries out the reaction L-threonylcarbamoyladenylate + adenosine(37) in tRNA = N(6)-L-threonylcarbamoyladenosine(37) in tRNA + AMP + H(+). Functionally, required for the formation of a threonylcarbamoyl group on adenosine at position 37 (t(6)A37) in tRNAs that read codons beginning with adenine. Is involved in the transfer of the threonylcarbamoyl moiety of threonylcarbamoyl-AMP (TC-AMP) to the N6 group of A37, together with TsaE and TsaB. TsaD likely plays a direct catalytic role in this reaction. The sequence is that of tRNA N6-adenosine threonylcarbamoyltransferase from Klebsiella pneumoniae (strain 342).